Here is a 135-residue protein sequence, read N- to C-terminus: Small ribosomal subunit protein uS11 (135 aa).

This sequence belongs to the universal ribosomal protein uS11 family. Part of the 30S ribosomal subunit. Interacts with proteins S7 and S18. Binds to IF-3.

In terms of biological role, located on the platform of the 30S subunit, it bridges several disparate RNA helices of the 16S rRNA. Forms part of the Shine-Dalgarno cleft in the 70S ribosome. The chain is Small ribosomal subunit protein uS11 from Cutibacterium acnes (strain DSM 16379 / KPA171202) (Propionibacterium acnes).